Consider the following 156-residue polypeptide: SsrA-binding protein (156 aa).

It belongs to the SmpB family.

Its subcellular location is the cytoplasm. Functionally, required for rescue of stalled ribosomes mediated by trans-translation. Binds to transfer-messenger RNA (tmRNA), required for stable association of tmRNA with ribosomes. tmRNA and SmpB together mimic tRNA shape, replacing the anticodon stem-loop with SmpB. tmRNA is encoded by the ssrA gene; the 2 termini fold to resemble tRNA(Ala) and it encodes a 'tag peptide', a short internal open reading frame. During trans-translation Ala-aminoacylated tmRNA acts like a tRNA, entering the A-site of stalled ribosomes, displacing the stalled mRNA. The ribosome then switches to translate the ORF on the tmRNA; the nascent peptide is terminated with the 'tag peptide' encoded by the tmRNA and targeted for degradation. The ribosome is freed to recommence translation, which seems to be the essential function of trans-translation. The protein is SsrA-binding protein of Bacillus velezensis (strain DSM 23117 / BGSC 10A6 / LMG 26770 / FZB42) (Bacillus amyloliquefaciens subsp. plantarum).